Reading from the N-terminus, the 103-residue chain is uncharacterized protein (103 aa).

This is an uncharacterized protein from Saccharomyces cerevisiae (strain ATCC 204508 / S288c) (Baker's yeast).